Reading from the N-terminus, the 194-residue chain is Aminodeoxychorismate/anthranilate synthase component 2 (194 aa).

A Glutamine amidotransferase type-1 domain is found at 1-194; it reads MILMIDNYDS…IETYRKEVIA (194 aa). Catalysis depends on residues C79, H168, and E170.

Monomer. Heterodimer consisting of two non-identical subunits: a glutamine amidotransferase subunit (PabA) and a aminodeoxychorismate synthase subunit (PabB).

It carries out the reaction chorismate + L-glutamine = anthranilate + pyruvate + L-glutamate + H(+). The enzyme catalyses chorismate + L-glutamine = 4-amino-4-deoxychorismate + L-glutamate. It participates in amino-acid biosynthesis; L-tryptophan biosynthesis; L-tryptophan from chorismate: step 1/5. The protein operates within cofactor biosynthesis; tetrahydrofolate biosynthesis; 4-aminobenzoate from chorismate: step 1/2. Part of a heterodimeric complex that catalyzes the two-step biosynthesis of 4-amino-4-deoxychorismate (ADC), a precursor of p-aminobenzoate (PABA) and tetrahydrofolate. In the first step, a glutamine amidotransferase (PabA) generates ammonia as a substrate that, along with chorismate, is used in the second step, catalyzed by aminodeoxychorismate synthase (PabB) to produce ADC. PabA converts glutamine into glutamate only in the presence of stoichiometric amounts of PabB. Also involved in the biosynthesis of anthranilate. Complements a glutamine amidotransferase-negative mutant. The sequence is that of Aminodeoxychorismate/anthranilate synthase component 2 from Bacillus subtilis (strain 168).